A 326-amino-acid chain; its full sequence is Archaeal actin homolog (326 aa).

ATP contacts are provided by residues 10–14 (YGDTK), serine 179, glutamine 231, 285–288 (GGSN), and glutamine 311.

The protein belongs to the thermophilic archaeal actin family.

In terms of biological role, polymerizes into bundles of filaments, forming a helix with a filament width of 5.5 nm and an axial repeating unit of 5.5 nm. Polymerization of Ta0583 requires NTP and is optimal with ATP, but GTP, UTP, CTP, and even the deoxy form of NTP can also support the polymerization reaction. Nucleoside diphosphate or AMP-PNP does not support polymerization. The chain is Archaeal actin homolog from Thermoplasma acidophilum (strain ATCC 25905 / DSM 1728 / JCM 9062 / NBRC 15155 / AMRC-C165).